Consider the following 313-residue polypeptide: Ribosomal protein L11 methyltransferase (313 aa).

Residues Thr-164, Gly-185, Asp-207, and Asn-249 each coordinate S-adenosyl-L-methionine.

It belongs to the methyltransferase superfamily. PrmA family.

The protein localises to the cytoplasm. It carries out the reaction L-lysyl-[protein] + 3 S-adenosyl-L-methionine = N(6),N(6),N(6)-trimethyl-L-lysyl-[protein] + 3 S-adenosyl-L-homocysteine + 3 H(+). Functionally, methylates ribosomal protein L11. The sequence is that of Ribosomal protein L11 methyltransferase from Clostridium perfringens (strain 13 / Type A).